Consider the following 397-residue polypeptide: Tryptophan synthase beta chain (397 aa).

N6-(pyridoxal phosphate)lysine is present on lysine 87.

It belongs to the TrpB family. As to quaternary structure, tetramer of two alpha and two beta chains. Pyridoxal 5'-phosphate is required as a cofactor.

The catalysed reaction is (1S,2R)-1-C-(indol-3-yl)glycerol 3-phosphate + L-serine = D-glyceraldehyde 3-phosphate + L-tryptophan + H2O. It functions in the pathway amino-acid biosynthesis; L-tryptophan biosynthesis; L-tryptophan from chorismate: step 5/5. In terms of biological role, the beta subunit is responsible for the synthesis of L-tryptophan from indole and L-serine. In Salmonella choleraesuis (strain SC-B67), this protein is Tryptophan synthase beta chain.